We begin with the raw amino-acid sequence, 200 residues long: Tegument protein UL55 homolog (200 aa).

Over residues 1–20 the composition is skewed to basic and acidic residues; it reads MLPANRAEHSSDAEPRDIGS. The tract at residues 1 to 23 is disordered; the sequence is MLPANRAEHSSDAEPRDIGSHGR.

It belongs to the alphaherpesvirinae HHV-1 UL55 family.

The protein resides in the virion tegument. Its subcellular location is the host nucleus matrix. This chain is Tegument protein UL55 homolog, found in Equine herpesvirus 1 (strain Ab4p) (EHV-1).